The chain runs to 159 residues: Ethylene-responsive transcription factor ERF069 (159 aa).

2 disordered regions span residues methionine 1–valine 36 and aspartate 128–valine 159. A DNA-binding region (AP2/ERF) is located at residues lysine 74–glycine 134. The span at proline 136–serine 148 shows a compositional bias: basic and acidic residues.

This sequence belongs to the AP2/ERF transcription factor family. ERF subfamily.

Its subcellular location is the nucleus. Its function is as follows. Probably acts as a transcriptional activator. Binds to the GCC-box pathogenesis-related promoter element. May be involved in the regulation of gene expression by stress factors and by components of stress signal transduction pathways. In Arabidopsis thaliana (Mouse-ear cress), this protein is Ethylene-responsive transcription factor ERF069 (ERF069).